Reading from the N-terminus, the 765-residue chain is MSNQGVRRNGPVKLRLTVLCAKNLVKKDFFRLPDPFAKVVVDGSGQCHSTDTVRNTLDPKWNQHYDLYIGKSDSITISVWNHKKIHKKQGAGFLGCVRLLSNSINRLKDTGYQRLDLNKLGPNDSDTVRGQIVVSLQSRDRIGSGGPVVDCSRLFDNDLPDGWEERRTASGRIQYLNHITRSTQWERPTRPASEYSSPGRPLSCLVDENTPIMTPNGAAGVPADDPRVQERRVRSQRHRNYMSRTHLHTPPDLPEGYEQRTTQQGQVYFLHTQTGVSTWHDPRVPRDLSNVNCEELGPLPPGWEIRNTATGRVYFVDHNNRTTQFTDPRLSANLHLVLNPSPNGSRAAVEAQSSSRPGQLKEQAQSVVSPGNLPEDPECLTVPKYKRDLVQKLKILRQELSQQQPQAGHCRIEVSREEIFEESYRQVMKMRPKDLWKRLMVKFRGEEGLDYGGVAREWLYLLSHEMLNPYYGLFQYSRDDIYTLQINPDSAVNPEHLSYFHFVGRIMGMAVFHGHYIDGGFTLPFYKQLLGKPITLDDMESVDPDLHNSLVWILDNDITGVLDHTFCVEHNAYGEIIQHELKPNGKSIPVTQDTKKEYVRLYVNWRFLRGIEAQFLALQKGFNEVIPQHLLKAFDEKELELIVCGLGKIDINDWKSNTRLKHCTPDSNIVKWFWRAVESYDEERRARLLQFVTGSSRVPLQGFKALQGAAGPRLFTIHQIDASTNNLPKAHTCFNRIDIPPYESYDKLYDKLLTAIEETCGFAVE.

The region spanning 1–117 (MSNQGVRRNG…KDTGYQRLDL (117 aa)) is the C2 domain. 3 WW domains span residues 157–190 (NDLP…RPTR), 251–284 (PDLP…DPRV), and 297–330 (GPLP…DPRL). Residues 341–375 (SPNGSRAAVEAQSSSRPGQLKEQAQSVVSPGNLPE) are disordered. Residues 351-369 (AQSSSRPGQLKEQAQSVVS) are compositionally biased toward polar residues. The 335-residue stretch at 431–765 (RPKDLWKRLM…IEETCGFAVE (335 aa)) folds into the HECT domain. Catalysis depends on Cys733, which acts as the Glycyl thioester intermediate.

It is found in the nucleus. The protein resides in the cytoplasm. The protein localises to the cell membrane. Its subcellular location is the membrane raft. The catalysed reaction is S-ubiquitinyl-[E2 ubiquitin-conjugating enzyme]-L-cysteine + [acceptor protein]-L-lysine = [E2 ubiquitin-conjugating enzyme]-L-cysteine + N(6)-ubiquitinyl-[acceptor protein]-L-lysine.. The protein operates within protein modification; protein ubiquitination. Its function is as follows. E3 ubiquitin-protein ligase which accepts ubiquitin from an E2 ubiquitin-conjugating enzyme in the form of a thioester and then directly transfers the ubiquitin to targeted substrates. In Danio rerio (Zebrafish), this protein is E3 ubiquitin-protein ligase SMURF2 (smurf2).